The sequence spans 200 residues: Probable GTP-binding protein EngB (200 aa).

Residues 22–194 form the EngB-type G domain; it reads TLPEVAFVGR…WKEVLRLTLA (173 aa). GTP-binding positions include 30–37, 57–61, 75–78, 142–145, and 173–175; these read GRSNVGKS, GRTQL, DLPG, TKCD, and FSA. Serine 37 and threonine 59 together coordinate Mg(2+).

Belongs to the TRAFAC class TrmE-Era-EngA-EngB-Septin-like GTPase superfamily. EngB GTPase family. Requires Mg(2+) as cofactor.

In terms of biological role, necessary for normal cell division and for the maintenance of normal septation. The polypeptide is Probable GTP-binding protein EngB (Pelobacter propionicus (strain DSM 2379 / NBRC 103807 / OttBd1)).